The chain runs to 103 residues: Large ribosomal subunit protein bL21 (103 aa).

Belongs to the bacterial ribosomal protein bL21 family. In terms of assembly, part of the 50S ribosomal subunit. Contacts protein L20.

This protein binds to 23S rRNA in the presence of protein L20. This chain is Large ribosomal subunit protein bL21, found in Tolumonas auensis (strain DSM 9187 / NBRC 110442 / TA 4).